A 327-amino-acid polypeptide reads, in one-letter code: AA9 family lytic polysaccharide monooxygenase G (327 aa).

Residues 1–20 form the signal peptide; sequence MKLNLASLCFLASIAPLVSG. Residues H21 and H96 each coordinate Cu(2+). A disulfide bridge links C62 with C185. H172 contributes to the O2 binding site. Y182 contacts Cu(2+). N290 is a glycosylation site (N-linked (GlcNAc...) asparagine). The region spanning 291-327 is the CBM1 domain; it reads GTIKKYYQCGGQGWTGSGSCEAGTSCREWNTWYFQCV.

Belongs to the polysaccharide monooxygenase AA9 family. Cu(2+) is required as a cofactor.

The protein resides in the secreted. It catalyses the reaction [(1-&gt;4)-beta-D-glucosyl]n+m + reduced acceptor + O2 = 4-dehydro-beta-D-glucosyl-[(1-&gt;4)-beta-D-glucosyl]n-1 + [(1-&gt;4)-beta-D-glucosyl]m + acceptor + H2O.. Its function is as follows. Lytic polysaccharide monooxygenase (LPMO) that depolymerizes crystalline and amorphous polysaccharides via the oxidation of scissile alpha- or beta-(1-4)-glycosidic bonds, yielding C1 or C4 oxidation products. Catalysis by LPMOs requires the reduction of the active-site copper from Cu(II) to Cu(I) by a reducing agent and H(2)O(2) or O(2) as a cosubstrate. The polypeptide is AA9 family lytic polysaccharide monooxygenase G (Aspergillus tamarii).